The following is a 293-amino-acid chain: Ribonuclease HIII (293 aa).

One can recognise an RNase H type-2 domain in the interval 78–293 (LPLIGTDEVG…TEKAKKRLER (216 aa)). Residues Asp84, Glu85, and Asp187 each coordinate a divalent metal cation.

This sequence belongs to the RNase HII family. RnhC subfamily. Mn(2+) serves as cofactor. The cofactor is Mg(2+).

Its subcellular location is the cytoplasm. The catalysed reaction is Endonucleolytic cleavage to 5'-phosphomonoester.. Functionally, endonuclease that specifically degrades the RNA of RNA-DNA hybrids. In Streptococcus pneumoniae (strain Taiwan19F-14), this protein is Ribonuclease HIII.